An 878-amino-acid chain; its full sequence is Serine/threonine-protein kinase D2 (878 aa).

The segment covering 1–12 (MATAPSYPAGLP) has biased composition (low complexity). Residues 1-35 (MATAPSYPAGLPGSPGPGSPPPPGGLELQSPPPLL) are disordered. Over residues 14-35 (SPGPGSPPPPGGLELQSPPPLL) the composition is skewed to pro residues. Serine 30 bears the Phosphoserine mark. Phosphotyrosine is present on tyrosine 87. A Phorbol-ester/DAG-type 1 zinc finger spans residues 138–188 (PHALTVHSYRAPAFCDHCGEMLFGLVRQGLKCDGCGLNYHKRCAFSIPNNC). Phosphoserine is present on residues serine 197, serine 198, serine 200, serine 203, serine 206, serine 212, and serine 214. Residues 224-247 (RSTTELLPRRPPSSSSSSSASSYT) are disordered. Residues 236–245 (SSSSSSSASS) show a composition bias toward low complexity. Residue serine 244 is modified to Phosphoserine; by CSNK1D and CSNK1E. The segment at 264–314 (PHTFLIHSYTRPTVCQACKKLLKGLFRQGLQCKDCKFNCHKRCATRVPNDC) adopts a Phorbol-ester/DAG-type 2 zinc-finger fold. Residues 343–373 (ESEDSGVIPGSHSENALHASEEEEGEGGKAQ) form a disordered region. Positions 397–509 (TTLREGWVVH…WETAIRQALM (113 aa)) constitute a PH domain. Tyrosine 407 bears the Phosphotyrosine mark. Tyrosine 438 carries the phosphotyrosine; by ABL1 modification. At serine 518 the chain carries Phosphoserine. The Protein kinase domain occupies 551 to 807 (IFPDEVLGSG…VDKSLSHPWL (257 aa)). ATP is bound by residues 557–565 (LGSGQFGVV) and lysine 580. The Proton acceptor role is filled by aspartate 674. Serine 706 bears the Phosphoserine; by PKC mark. Position 710 is a phosphoserine (serine 710). Tyrosine 717 is modified (phosphotyrosine; by ABL1). The Important for ABL1-mediated Tyr-717 phosphorylation motif lies at 724-726 (LNQ). A disordered region spans residues 844–869 (HPLPGSGLPTDRDLGGACPPQDHDMQ). Serine 876 carries the post-translational modification Phosphoserine; by autocatalysis.

This sequence belongs to the protein kinase superfamily. CAMK Ser/Thr protein kinase family. PKD subfamily. Interacts (via C-terminus) with LCK. Interacts (via N-terminal AP-rich region) with CIB1 isoform 2. Interacts (via N-terminus and zing-finger domain 1 and 2) with PRKCD in response to oxidative stress; the interaction is independent of PRKD2 tyrosine phosphorylation. It depends on Mg(2+) as a cofactor. Post-translationally, phosphorylation of Ser-876 correlates with the activation status of the kinase. Ser-706 or/and Ser-710 are probably phosphorylated by PKC. Phosphorylation at Ser-244 by CSNK1D and CSNK1E promotes nuclear localization and substrate targeting. Phosphorylation at Ser-244, Ser-706 and Ser-710 is required for nuclear localization. Phosphorylated at Tyr-438 by ABL1 in response to oxidative stress. Phosphorylated at Tyr-717 by ABL1 specifically in response to oxidative stress; requires prior phosphorylation at Ser-706 or/and Ser-710. As to expression, widely expressed.

The protein resides in the cytoplasm. The protein localises to the cell membrane. It localises to the nucleus. It is found in the golgi apparatus. Its subcellular location is the trans-Golgi network. It catalyses the reaction L-seryl-[protein] + ATP = O-phospho-L-seryl-[protein] + ADP + H(+). The enzyme catalyses L-threonyl-[protein] + ATP = O-phospho-L-threonyl-[protein] + ADP + H(+). Activated by DAG and phorbol esters. Phorbol-ester/DAG-type domains bind DAG, mediating translocation to membranes. Autophosphorylation of Ser-710 and phosphorylation of Ser-706 by PKC relieves auto-inhibition by the PH domain. Catalytic activity is further increased by phosphorylation at Tyr-717 in response to oxidative stress. In terms of biological role, serine/threonine-protein kinase that converts transient diacylglycerol (DAG) signals into prolonged physiological effects downstream of PKC, and is involved in the regulation of cell proliferation via MAPK1/3 (ERK1/2) signaling, oxidative stress-induced NF-kappa-B activation, inhibition of HDAC7 transcriptional repression, signaling downstream of T-cell antigen receptor (TCR) and cytokine production, and plays a role in Golgi membrane trafficking, angiogenesis, secretory granule release and cell adhesion. May potentiate mitogenesis induced by the neuropeptide bombesin by mediating an increase in the duration of MAPK1/3 (ERK1/2) signaling, which leads to accumulation of immediate-early gene products including FOS that stimulate cell cycle progression. In response to oxidative stress, is phosphorylated at Tyr-438 and Tyr-717 by ABL1, which leads to the activation of PRKD2 without increasing its catalytic activity, and mediates activation of NF-kappa-B. In response to the activation of the gastrin receptor CCKBR, is phosphorylated at Ser-244 by CSNK1D and CSNK1E, translocates to the nucleus, phosphorylates HDAC7, leading to nuclear export of HDAC7 and inhibition of HDAC7 transcriptional repression of NR4A1/NUR77. Upon TCR stimulation, is activated independently of ZAP70, translocates from the cytoplasm to the nucleus and is required for interleukin-2 (IL2) promoter up-regulation. During adaptive immune responses, is required in peripheral T-lymphocytes for the production of the effector cytokines IL2 and IFNG after TCR engagement and for optimal induction of antibody responses to antigens. In epithelial cells stimulated with lysophosphatidic acid (LPA), is activated through a PKC-dependent pathway and mediates LPA-stimulated interleukin-8 (IL8) secretion via a NF-kappa-B-dependent pathway. During TCR-induced T-cell activation, interacts with and is activated by the tyrosine kinase LCK, which results in the activation of the NFAT transcription factors. In the trans-Golgi network (TGN), regulates the fission of transport vesicles that are on their way to the plasma membrane and in polarized cells is involved in the transport of proteins from the TGN to the basolateral membrane. Plays an important role in endothelial cell proliferation and migration prior to angiogenesis, partly through modulation of the expression of KDR/VEGFR2 and FGFR1, two key growth factor receptors involved in angiogenesis. In secretory pathway, is required for the release of chromogranin-A (CHGA)-containing secretory granules from the TGN. Downstream of PRKCA, plays important roles in angiotensin-2-induced monocyte adhesion to endothelial cells. Plays a regulatory role in angiogenesis and tumor growth by phosphorylating a downstream mediator CIB1 isoform 2, resulting in vascular endothelial growth factor A (VEGFA) secretion. In Homo sapiens (Human), this protein is Serine/threonine-protein kinase D2 (PRKD2).